Here is a 140-residue protein sequence, read N- to C-terminus: Ribosome-binding factor A (140 aa).

Residues 118–133 (DEAKQQKHNGKDKTDT) show a composition bias toward basic and acidic residues. The disordered stretch occupies residues 118 to 140 (DEAKQQKHNGKDKTDTADSEGEE).

It belongs to the RbfA family. As to quaternary structure, monomer. Binds 30S ribosomal subunits, but not 50S ribosomal subunits or 70S ribosomes.

The protein resides in the cytoplasm. In terms of biological role, one of several proteins that assist in the late maturation steps of the functional core of the 30S ribosomal subunit. Associates with free 30S ribosomal subunits (but not with 30S subunits that are part of 70S ribosomes or polysomes). Required for efficient processing of 16S rRNA. May interact with the 5'-terminal helix region of 16S rRNA. This Shewanella woodyi (strain ATCC 51908 / MS32) protein is Ribosome-binding factor A.